The primary structure comprises 149 residues: 18 kDa antigen 1 (149 aa).

The sHSP domain maps to 21 to 131 (TAARPAVMPM…KPRKIAVGRG (111 aa)).

The protein belongs to the small heat shock protein (HSP20) family.

In terms of biological role, not known. This protein is one of the major immune reactive proteins in mycobacteria. This chain is 18 kDa antigen 1, found in Mycobacterium intracellulare.